Consider the following 223-residue polypeptide: uncharacterized protein (223 aa).

A Response regulatory domain is found at 5-116; that stretch reads RILIVEDDVM…ELLLRMRNML (112 aa). The residue at position 52 (Asp52) is a 4-aspartylphosphate. A DNA-binding region (ompR/PhoB-type) is located at residues 121–219; sequence GTFTQIKHLY…IYGEGYRLNT (99 aa).

Phosphorylated by YbdK.

The protein localises to the cytoplasm. Member of the two-component regulatory system YbdK/YbdJ. This is an uncharacterized protein from Bacillus subtilis (strain 168).